The primary structure comprises 56 residues: Large ribosomal subunit protein bL32 (56 aa).

The protein belongs to the bacterial ribosomal protein bL32 family.

The chain is Large ribosomal subunit protein bL32 from Edwardsiella ictaluri (strain 93-146).